The primary structure comprises 200 residues: Pyridoxal 5'-phosphate synthase subunit PdxT (200 aa).

An L-glutamine-binding site is contributed by 50–52; the sequence is GES. Residue C82 is the Nucleophile of the active site. L-glutamine is bound by residues R110 and 138-139; that span reads IR. Active-site charge relay system residues include H174 and E176.

Belongs to the glutaminase PdxT/SNO family. As to quaternary structure, in the presence of PdxS, forms a dodecamer of heterodimers. Only shows activity in the heterodimer.

It catalyses the reaction aldehydo-D-ribose 5-phosphate + D-glyceraldehyde 3-phosphate + L-glutamine = pyridoxal 5'-phosphate + L-glutamate + phosphate + 3 H2O + H(+). It carries out the reaction L-glutamine + H2O = L-glutamate + NH4(+). It participates in cofactor biosynthesis; pyridoxal 5'-phosphate biosynthesis. In terms of biological role, catalyzes the hydrolysis of glutamine to glutamate and ammonia as part of the biosynthesis of pyridoxal 5'-phosphate. The resulting ammonia molecule is channeled to the active site of PdxS. This is Pyridoxal 5'-phosphate synthase subunit PdxT from Oceanobacillus iheyensis (strain DSM 14371 / CIP 107618 / JCM 11309 / KCTC 3954 / HTE831).